The sequence spans 119 residues: Large ribosomal subunit protein uL22c (119 aa).

This sequence belongs to the universal ribosomal protein uL22 family. As to quaternary structure, part of the 50S ribosomal subunit.

It is found in the plastid. It localises to the chloroplast. In terms of biological role, this protein binds specifically to 23S rRNA. The globular domain of the protein is located near the polypeptide exit tunnel on the outside of the subunit, while an extended beta-hairpin is found that lines the wall of the exit tunnel in the center of the 70S ribosome. The chain is Large ribosomal subunit protein uL22c (rpl22) from Chaetosphaeridium globosum (Charophycean green alga).